A 139-amino-acid chain; its full sequence is FAD synthase (139 aa).

ATP is bound by residues 9–10 (TF), 14–17 (HPGH), and D92.

Belongs to the archaeal FAD synthase family. As to quaternary structure, homodimer. It depends on a divalent metal cation as a cofactor.

The enzyme catalyses FMN + ATP + H(+) = FAD + diphosphate. It functions in the pathway cofactor biosynthesis; FAD biosynthesis; FAD from FMN: step 1/1. Functionally, catalyzes the transfer of the AMP portion of ATP to flavin mononucleotide (FMN) to produce flavin adenine dinucleotide (FAD) coenzyme. In Methanosarcina barkeri (strain Fusaro / DSM 804), this protein is FAD synthase.